Here is a 211-residue protein sequence, read N- to C-terminus: MMLILGVDEAGKGPVIGSMFVAGVVFSEEDIFDLAACGVKDSKLLSPTRRESMERKILSIARESFVLEVTAQQIDDLRMVMSMNEIMVRAHSRVVSRLQADRAILDAADVNAERFAQRVREVSGKPIDILAEHNADRKHIVVAAASIIAKVARDRSIRDLEAALGRPLGSGYPSDPATVRFLKEWIEENGDLPSFVRKSWSTAQRLKASSV.

The RNase H type-2 domain occupies 2 to 211 (MLILGVDEAG…TAQRLKASSV (210 aa)). Positions 8, 9, and 106 each coordinate a divalent metal cation.

Belongs to the RNase HII family. The cofactor is Mn(2+). It depends on Mg(2+) as a cofactor.

The protein resides in the cytoplasm. The enzyme catalyses Endonucleolytic cleavage to 5'-phosphomonoester.. Its function is as follows. Endonuclease that specifically degrades the RNA of RNA-DNA hybrids. The protein is Ribonuclease HII of Methanothrix thermoacetophila (strain DSM 6194 / JCM 14653 / NBRC 101360 / PT) (Methanosaeta thermophila).